The chain runs to 309 residues: Ribonuclease Z (309 aa).

Zn(2+)-binding residues include histidine 63, histidine 65, aspartate 67, histidine 68, histidine 145, aspartate 216, and histidine 274. Aspartate 67 serves as the catalytic Proton acceptor.

It belongs to the RNase Z family. Homodimer. Zn(2+) is required as a cofactor.

The enzyme catalyses Endonucleolytic cleavage of RNA, removing extra 3' nucleotides from tRNA precursor, generating 3' termini of tRNAs. A 3'-hydroxy group is left at the tRNA terminus and a 5'-phosphoryl group is left at the trailer molecule.. In terms of biological role, zinc phosphodiesterase, which displays some tRNA 3'-processing endonuclease activity. Probably involved in tRNA maturation, by removing a 3'-trailer from precursor tRNA. This chain is Ribonuclease Z, found in Streptococcus equi subsp. equi (strain 4047).